The primary structure comprises 109 residues: Biphenyl dioxygenase ferredoxin subunit (109 aa).

Positions 4–100 (TKACSVDEVP…IRIEGRDVLV (97 aa)) constitute a Rieske domain. [2Fe-2S] cluster-binding residues include C43, H45, C63, and H66.

This sequence belongs to the bacterial ring-hydroxylating dioxygenase ferredoxin component family. This dioxygenase system consists of four proteins: the two subunits of the hydroxylase component (BphA1 and BphA2), a ferredoxin (BphA3) and a ferredoxin reductase (BphA4).

This protein seems to be a 2Fe-2S ferredoxin. This chain is Biphenyl dioxygenase ferredoxin subunit (bphA3), found in Pseudomonas sp. (strain KKS102).